A 163-amino-acid chain; its full sequence is Small ribosomal subunit protein bS18c (163 aa).

2 disordered regions span residues 1–52 and 144–163; these read MYIS…IGPG and NLRN…SSDC. The span at 7 to 48 shows a compositional bias: basic residues; the sequence is PFRKSKQPFRKSKQPFHKSKQPFRKFKQPFRKSKQPFRRRSR.

It belongs to the bacterial ribosomal protein bS18 family. Part of the 30S ribosomal subunit.

The protein localises to the plastid. Its subcellular location is the chloroplast. The protein is Small ribosomal subunit protein bS18c of Saccharum hybrid (Sugarcane).